The following is a 365-amino-acid chain: MLPPLPSRLGLLLLLLLCPAHVGGLWWAVGSPLVMDPTSICRKARRLAGRQAELCQAEPEVVAELARGARLGVRECQFQFRFRRWNCSSHSKAFGRILQQDIRETAFVFAITAAGASHAVTQACSMGELLQCGCQAPRGRAPPRPSGLPGTPGPPGPAGSPEGSAAWEWGGCGDDVDFGDEKSRLFMDARHKRGRGDIRALVQLHNNEAGRLAVRSHTRTECKCHGLSGSCALRTCWQKLPPFREVGARLLERFHGASRVMGTNDGKALLPAVRTLKPPGRADLLYAADSPDFCAPNRRTGSPGTRGRACNSSAPDLSGCDLLCCGRGHRQESVQLEENCLCRFHWCCVVQCHRCRVRKELSLCL.

Residues 1 to 24 (MLPPLPSRLGLLLLLLLCPAHVGG) form the signal peptide. Disulfide bonds link Cys76–Cys87, Cys124–Cys132, Cys134–Cys172, Cys222–Cys236, Cys224–Cys231, Cys294–Cys325, Cys310–Cys320, Cys324–Cys364, Cys340–Cys355, Cys342–Cys352, and Cys347–Cys348. The N-linked (GlcNAc...) asparagine glycan is linked to Asn86. Residues 140 to 158 (RAPPRPSGLPGTPGPPGPA) are compositionally biased toward pro residues. The segment at 140–164 (RAPPRPSGLPGTPGPPGPAGSPEGS) is disordered. Ser228 carries O-palmitoleoyl serine; by PORCN lipidation. N-linked (GlcNAc...) asparagine glycosylation occurs at Asn311.

It belongs to the Wnt family. In terms of assembly, interacts with PORCN. In terms of processing, palmitoleoylation is required for efficient binding to frizzled receptors. Depalmitoleoylation leads to Wnt signaling pathway inhibition. As to expression, expressed in gastric cancer cell lines and gastric cancer tissues (at protein level). Detected in the apical gland region of the gastric foveolar epithelium (at protein level).

The protein resides in the secreted. It localises to the extracellular space. It is found in the extracellular matrix. Ligand for members of the frizzled family of seven transmembrane receptors. Probable developmental protein. May be a signaling molecule which affects the development of discrete regions of tissues. Is likely to signal over only few cell diameters. Together with CAV1 may promote chemoresistance of gastric cancer cells to DNA-damaging anthracycline drugs through the activation of the canonical Wnt receptor signaling pathway. The polypeptide is Protein Wnt-6 (WNT6) (Homo sapiens (Human)).